The chain runs to 432 residues: MQVSVETTQGLGRRVTITIAADSIETAVKSELVNVAKKVRIDGFRKGKVPMNIVAQRYGASVRQDVLGDLMSRNFVDAIIKEKINPAGAPNYVPGEYKVGEDFTYSVEFEVYPEVELTGLESIEVEKPVVEVTDADVDVMLDTLRKQQATWKEKDGAADAEDRVTLDFTGTVDGEEFEGGKATDFVLAMGQGRMIPGFEDGVKGHKVGEEFTIDVTFPEEYHAENLKGKAAKFAINLKKVEERELPELTEEFIKRFGVEDGSVAGLRAEVRKNMERELKGAVRNRVKSQAIEGLVKANDIDVPSALIDSEIDVLRRQAAQRFGGNEKQALELPRELFEEQAKRRVVVGLLLGEVIRTNELKADEVRVKGLIEEMASAYEDPKEVIEFYSKNKELMDNMRNVALEEQAIEAVLAKAKVSEKATSFNELMNQQA.

A PPIase FKBP-type domain is found at 161–246; that stretch reads EDRVTLDFTG…LKKVEERELP (86 aa).

The protein belongs to the FKBP-type PPIase family. Tig subfamily.

Its subcellular location is the cytoplasm. It catalyses the reaction [protein]-peptidylproline (omega=180) = [protein]-peptidylproline (omega=0). Involved in protein export. Acts as a chaperone by maintaining the newly synthesized protein in an open conformation. Functions as a peptidyl-prolyl cis-trans isomerase. This chain is Trigger factor, found in Salmonella arizonae (strain ATCC BAA-731 / CDC346-86 / RSK2980).